A 421-amino-acid chain; its full sequence is UV-B-induced protein At3g17800, chloroplastic (421 aa).

2 disordered regions span residues 1 to 40 (MDAL…RSGS) and 74 to 95 (VRAS…IAPL). Residues 1 to 75 (MDALTSSLVR…AKTRRSFVVR (75 aa)) constitute a chloroplast transit peptide. Polar residues predominate over residues 16–28 (SRTSDNGSGSMFL). Low complexity predominate over residues 74–88 (VRASSASNDASSGSS).

It localises to the plastid. It is found in the chloroplast. The chain is UV-B-induced protein At3g17800, chloroplastic from Arabidopsis thaliana (Mouse-ear cress).